A 550-amino-acid chain; its full sequence is GMP synthase [glutamine-hydrolyzing] (550 aa).

Residues 39–232 enclose the Glutamine amidotransferase type-1 domain; it reads RILILDFGSQ…VHKICGCGGL (194 aa). The active-site Nucleophile is Cys116. Active-site residues include His206 and Glu208. Residues 233–425 enclose the GMPS ATP-PPase domain; that stretch reads WTPEHIIDLR…LGLPHSMIYR (193 aa). 260-266 provides a ligand contact to ATP; the sequence is SGGVDSS.

Homodimer.

It carries out the reaction XMP + L-glutamine + ATP + H2O = GMP + L-glutamate + AMP + diphosphate + 2 H(+). The protein operates within purine metabolism; GMP biosynthesis; GMP from XMP (L-Gln route): step 1/1. Catalyzes the synthesis of GMP from XMP. The protein is GMP synthase [glutamine-hydrolyzing] of Acinetobacter baylyi (strain ATCC 33305 / BD413 / ADP1).